We begin with the raw amino-acid sequence, 252 residues long: Triosephosphate isomerase (252 aa).

9 to 11 (NWK) is a substrate binding site. His96 functions as the Electrophile in the catalytic mechanism. Residue Glu166 is the Proton acceptor of the active site. Substrate is bound by residues Gly172, Ser212, and 233 to 234 (GG).

It belongs to the triosephosphate isomerase family. Homodimer.

It is found in the cytoplasm. It catalyses the reaction D-glyceraldehyde 3-phosphate = dihydroxyacetone phosphate. It functions in the pathway carbohydrate biosynthesis; gluconeogenesis. Its pathway is carbohydrate degradation; glycolysis; D-glyceraldehyde 3-phosphate from glycerone phosphate: step 1/1. Its function is as follows. Involved in the gluconeogenesis. Catalyzes stereospecifically the conversion of dihydroxyacetone phosphate (DHAP) to D-glyceraldehyde-3-phosphate (G3P). This chain is Triosephosphate isomerase, found in Chlorobium chlorochromatii (strain CaD3).